The chain runs to 107 residues: Small ribosomal subunit protein uS17 (107 aa).

It belongs to the universal ribosomal protein uS17 family. In terms of assembly, part of the 30S ribosomal subunit.

In terms of biological role, one of the primary rRNA binding proteins, it binds specifically to the 5'-end of 16S ribosomal RNA. This is Small ribosomal subunit protein uS17 from Thermotoga maritima (strain ATCC 43589 / DSM 3109 / JCM 10099 / NBRC 100826 / MSB8).